Consider the following 313-residue polypeptide: HPr kinase/phosphorylase (313 aa).

Catalysis depends on residues H141 and K162. Position 156–163 (156–163) interacts with ATP; it reads GKSGIGKS. S163 is a Mg(2+) binding site. D180 (proton acceptor; for phosphorylation activity. Proton donor; for dephosphorylation activity) is an active-site residue. The interval 203 to 212 is important for the catalytic mechanism of both phosphorylation and dephosphorylation; sequence IEIRGIGIFD. E204 lines the Mg(2+) pocket. R247 is an active-site residue. The important for the catalytic mechanism of dephosphorylation stretch occupies residues 268-273; the sequence is PVSAGR.

It belongs to the HPrK/P family. Homohexamer. The cofactor is Mg(2+).

It catalyses the reaction [HPr protein]-L-serine + ATP = [HPr protein]-O-phospho-L-serine + ADP + H(+). The catalysed reaction is [HPr protein]-O-phospho-L-serine + phosphate + H(+) = [HPr protein]-L-serine + diphosphate. Its function is as follows. Catalyzes the ATP- as well as the pyrophosphate-dependent phosphorylation of a specific serine residue in HPr, a phosphocarrier protein of the phosphoenolpyruvate-dependent sugar phosphotransferase system (PTS). HprK/P also catalyzes the pyrophosphate-producing, inorganic phosphate-dependent dephosphorylation (phosphorolysis) of seryl-phosphorylated HPr (P-Ser-HPr). The two antagonistic activities of HprK/P are regulated by several intracellular metabolites, which change their concentration in response to the absence or presence of rapidly metabolisable carbon sources (glucose, fructose, etc.) in the growth medium. Therefore, by controlling the phosphorylation state of HPr, HPrK/P is a sensor enzyme that plays a major role in the regulation of carbon metabolism and sugar transport: it mediates carbon catabolite repression (CCR), and regulates PTS-catalyzed carbohydrate uptake and inducer exclusion. The chain is HPr kinase/phosphorylase from Mycoplasma mycoides subsp. mycoides SC (strain CCUG 32753 / NCTC 10114 / PG1).